Reading from the N-terminus, the 814-residue chain is Pre-rRNA-processing protein TSR1 homolog (814 aa).

Residues 1–67 (MADHAFHRPG…NQMNQLRKNK (67 aa)) form a disordered region. A compositionally biased stretch (basic residues) spans 16–27 (NKAHKTGRHRSK). Residues 84-249 (APFLVCLLPM…MRRIGGQKKR (166 aa)) enclose the Bms1-type G domain. Disordered regions lie at residues 316-357 (PYKL…DAEQ) and 392-448 (WIPD…EEFQ). Positions 317–340 (YKLDKSRDGENSEVRLLDRSDPSK) are enriched in basic and acidic residues. Residues 395–426 (DVEEVEDPDGKDDDDMSEDDDDDKEDDNEDFM) are compositionally biased toward acidic residues. A compositionally biased stretch (basic and acidic residues) spans 431 to 442 (KSFEDEYEKRDS). The residue at position 444 (threonine 444) is a Phosphothreonine.

This sequence belongs to the TRAFAC class translation factor GTPase superfamily. Bms1-like GTPase family. TSR1 subfamily.

The protein localises to the nucleus. Its subcellular location is the nucleolus. Required during maturation of the 40S ribosomal subunit in the nucleolus. This chain is Pre-rRNA-processing protein TSR1 homolog, found in Drosophila melanogaster (Fruit fly).